A 426-amino-acid chain; its full sequence is Serine--tRNA ligase (426 aa).

An L-serine-binding site is contributed by 233-235 (TAE). 264 to 266 (RSE) is an ATP binding site. An L-serine-binding site is contributed by glutamate 287. 351–354 (EISS) serves as a coordination point for ATP. Residue serine 387 coordinates L-serine.

It belongs to the class-II aminoacyl-tRNA synthetase family. Type-1 seryl-tRNA synthetase subfamily. As to quaternary structure, homodimer. The tRNA molecule binds across the dimer.

It is found in the cytoplasm. It carries out the reaction tRNA(Ser) + L-serine + ATP = L-seryl-tRNA(Ser) + AMP + diphosphate + H(+). The catalysed reaction is tRNA(Sec) + L-serine + ATP = L-seryl-tRNA(Sec) + AMP + diphosphate + H(+). The protein operates within aminoacyl-tRNA biosynthesis; selenocysteinyl-tRNA(Sec) biosynthesis; L-seryl-tRNA(Sec) from L-serine and tRNA(Sec): step 1/1. In terms of biological role, catalyzes the attachment of serine to tRNA(Ser). Is also able to aminoacylate tRNA(Sec) with serine, to form the misacylated tRNA L-seryl-tRNA(Sec), which will be further converted into selenocysteinyl-tRNA(Sec). This Pseudomonas paraeruginosa (strain DSM 24068 / PA7) (Pseudomonas aeruginosa (strain PA7)) protein is Serine--tRNA ligase.